The primary structure comprises 520 residues: Bifunctional purine biosynthesis protein PurH (520 aa).

The MGS-like domain maps to 1-147 (MAKIGRALIS…KNNRDVTVVV (147 aa)).

The protein belongs to the PurH family.

The catalysed reaction is (6R)-10-formyltetrahydrofolate + 5-amino-1-(5-phospho-beta-D-ribosyl)imidazole-4-carboxamide = 5-formamido-1-(5-phospho-D-ribosyl)imidazole-4-carboxamide + (6S)-5,6,7,8-tetrahydrofolate. The enzyme catalyses IMP + H2O = 5-formamido-1-(5-phospho-D-ribosyl)imidazole-4-carboxamide. It participates in purine metabolism; IMP biosynthesis via de novo pathway; 5-formamido-1-(5-phospho-D-ribosyl)imidazole-4-carboxamide from 5-amino-1-(5-phospho-D-ribosyl)imidazole-4-carboxamide (10-formyl THF route): step 1/1. It functions in the pathway purine metabolism; IMP biosynthesis via de novo pathway; IMP from 5-formamido-1-(5-phospho-D-ribosyl)imidazole-4-carboxamide: step 1/1. This is Bifunctional purine biosynthesis protein PurH from Citrifermentans bemidjiense (strain ATCC BAA-1014 / DSM 16622 / JCM 12645 / Bem) (Geobacter bemidjiensis).